The following is a 296-amino-acid chain: Uracil phosphoribosyltransferase, chloroplastic (296 aa).

A chloroplast-targeting transit peptide spans 1–61 (MACSIGNAFR…SSSLSRRTIR (61 aa)). Alanine 2 carries the N-acetylalanine modification. 148–151 (REPI) is a binding site for GTP. Residues arginine 158, arginine 183, aspartate 211, 216-219 (TGGT), and aspartate 282 each bind 5-phospho-alpha-D-ribose 1-diphosphate. 281-283 (GDA) is a uracil binding site.

It belongs to the UPRTase family. Requires Mg(2+) as cofactor.

The protein resides in the plastid. The protein localises to the chloroplast. It carries out the reaction UMP + diphosphate = 5-phospho-alpha-D-ribose 1-diphosphate + uracil. Its pathway is pyrimidine metabolism; UMP biosynthesis via salvage pathway; UMP from uracil: step 1/1. Its activity is regulated as follows. Allosterically activated by GTP. Its function is as follows. Uracil phosphoribosyltransferase (UPRT) that catalyzes the conversion of uracil and 5-phospho-alpha-D-ribose 1-diphosphate (PRPP) to UMP and diphosphate. Is probably the only functional UPRT, since the dual-domain proteins of the UKL family seem to lack this activity. This chain is Uracil phosphoribosyltransferase, chloroplastic (UPP), found in Arabidopsis thaliana (Mouse-ear cress).